We begin with the raw amino-acid sequence, 309 residues long: SUR7 family protein FMP45 (309 aa).

Topologically, residues 1 to 5 are cytoplasmic; that stretch reads MIFKR. Residues 6–26 traverse the membrane as a helical segment; the sequence is FVNLLVFLFLLGAGLLTFFLI. The Extracellular portion of the chain corresponds to 27 to 116; that stretch reads LSGGRESGTL…YYLSRVGWAM (90 aa). N73 carries N-linked (GlcNAc...) asparagine glycosylation. A helical membrane pass occupies residues 117–137; it reads LLISLFFIVLALVPGFLATFL. The Cytoplasmic segment spans residues 138–140; that stretch reads PFK. The chain crosses the membrane as a helical span at residues 141–161; that stretch reads AVPVLYCVLSWLAFFFIILAA. The Extracellular portion of the chain corresponds to 162–188; sequence CLYTGCYVKARKTFRNSGRSARLGPKN. The chain crosses the membrane as a helical span at residues 189–209; the sequence is FAFIWTSVFLMLVNAIWSTIF. Topologically, residues 210–309 are cytoplasmic; it reads SATHKAHSTY…GLAGPVTVRD (100 aa). Phosphoserine occurs at positions 230 and 232. Position 235 is a phosphothreonine (T235). Positions 253 to 309 are disordered; the sequence is GPITAAPVVGQPQPTTTTTPAGNGKFFQKLKTRKQVPSAELEPAGDGGLAGPVTVRD. The segment covering 258-274 has biased composition (low complexity); it reads APVVGQPQPTTTTTPAG.

Belongs to the SUR7 family.

It localises to the cell membrane. Involved in sporulation and affects the sphingolipid composition of the plasma membrane. This chain is SUR7 family protein FMP45 (FMP45), found in Saccharomyces cerevisiae (strain ATCC 204508 / S288c) (Baker's yeast).